The primary structure comprises 501 residues: Serine/threonine protein phosphatase 2A 55 kDa regulatory subunit B beta isoform (501 aa).

An N-acetylmethionine modification is found at Met-1. WD repeat units lie at residues 34–73, 110–151, 220–258, 269–309, and 328–366; these read QEVD…DHGG, EIEE…IKKI, AHDY…QSFN, DLTE…LCDS, and EIIA…GPVA. Positions 439–449 are enriched in polar residues; that stretch reads TPARPSRSIGS. The disordered stretch occupies residues 439–466; the sequence is TPARPSRSIGSMTRVVRRGSESPGTEAN. A WD 6 repeat occupies 471 to 501; sequence DFTTKLLHMAWHPTENSIACAAANSLYMYYA.

The protein belongs to the phosphatase 2A regulatory subunit B family. As to quaternary structure, PP2A consists of a common heteromeric enzyme, composed of a catalytic subunit (subunits C), a constant regulatory subunit (subunit A), and a variety of regulatory subunits such as subunits B (the R2/B/PR55/B55, R3/B''/PR72/PR130/PR59 and R5/B'/B56 families). Interacts with SIC/RON3. In terms of tissue distribution, expressed ubiquitously.

The B regulatory subunit may modulate substrate selectivity and catalytic activity, and may also direct the localization of the catalytic enzyme to a particular subcellular compartment. The polypeptide is Serine/threonine protein phosphatase 2A 55 kDa regulatory subunit B beta isoform (PP2AB2) (Arabidopsis thaliana (Mouse-ear cress)).